The chain runs to 2134 residues: Genome polyprotein (2134 aa).

Topologically, residues 1–1377 (MSKLFSTVGK…WLFEKIKTSK (1377 aa)) are cytoplasmic. The 102-residue stretch at 781-882 (IVSCSGEKAK…GDYGTKEGEK (102 aa)) folds into the LRAT domain. Active-site residues include histidine 791 and histidine 802. The active-site Acyl-thioester intermediate is cysteine 863. The 163-residue stretch at 1127–1289 (LNKLGRLDKP…EEFSTHAMLD (163 aa)) folds into the SF3 helicase domain. ATP is bound at residue 1153 to 1160 (GNRGGGKS). An intramembrane segment occupies 1378–1392 (WYILGCVGAVLSVSV). The Cytoplasmic portion of the chain corresponds to 1393-2134 (LGVFAYHMIK…VKYRFIDDSF (742 aa)). Residue tyrosine 1415 is modified to O-(5'-phospho-RNA)-tyrosine. One can recognise a Peptidase C3 domain in the interval 1431-1643 (DAQSVVDISN…ITKEMIEEML (213 aa)). Active-site for protease 3C activity residues include histidine 1477, aspartate 1515, and cysteine 1603. Residues 1880-2001 (DLVVGLDFSN…CIKKEYLDQK (122 aa)) form the RdRp catalytic domain.

The protein belongs to the picornaviridae polyprotein family. In terms of processing, specific enzymatic cleavages by the viral protease in vivo yield a variety of precursors and mature proteins. During virion maturation, non-infectious particles are rendered infectious following cleavage of VP0. This maturation cleavage is followed by a conformational change of the particle. VPg is uridylylated by the polymerase and is covalently linked to the 5'-end of genomic RNA. This uridylylated form acts as a nucleotide-peptide primer for the polymerase.

It localises to the virion. It is found in the host cytoplasm. The protein localises to the host cytoplasmic vesicle membrane. The enzyme catalyses RNA(n) + a ribonucleoside 5'-triphosphate = RNA(n+1) + diphosphate. It catalyses the reaction a ribonucleoside 5'-triphosphate + H2O = a ribonucleoside 5'-diphosphate + phosphate + H(+). The catalysed reaction is Selective cleavage of Gln-|-Gly bond in the poliovirus polyprotein. In other picornavirus reactions Glu may be substituted for Gln, and Ser or Thr for Gly.. Functionally, capsid proteins VP1, VP2, and VP3 form a closed capsid enclosing the viral positive strand RNA genome. All these proteins contain a beta-sheet structure called beta-barrel jelly roll. Together they form an icosahedral capsid (T=3) composed of 60 copies of each VP1, VP2, and VP3, with a diameter of approximately 300 Angstroms. VP1 is situated at the 12 fivefold axes, whereas VP2 and VP3 are located at the quasi-sixfold axes. Its function is as follows. VP0 precursor is a component of immature procapsids. The N-terminal domain of VP0, protein VP4, is needed for the assembly of 12 pentamers into the icosahedral structure. Unlike other picornaviruses, AEV VP4 may not be myristoylated. Protein 2B and 2BC precursor affect membrane integrity and cause an increase in membrane permeability. In terms of biological role, associates with and induces structural rearrangements of intracellular membranes. It displays RNA-binding, nucleotide binding and NTPase activities. Functionally, protein 3A, via its hydrophobic domain, serves as membrane anchor. Its function is as follows. Protein 3B is covalently linked to the 5'-end of both the positive-strand and negative-strand genomic RNAs. It acts as a genome-linked replication primer. Cysteine protease that generates mature viral proteins from the precursor polyprotein. In addition to its proteolytic activity, it binds to viral RNA, and thus influences viral genome replication. RNA and substrate bind cooperatively to the protease. In terms of biological role, RNA-directed RNA polymerase 3D-POL replicates genomic and antigenomic RNA by recognizing replications specific signals. The sequence is that of Genome polyprotein from Avian encephalomyelitis virus (strain Calnek vaccine) (AEV).